We begin with the raw amino-acid sequence, 465 residues long: Cysteine--tRNA ligase (465 aa).

Cysteine 27 contributes to the Zn(2+) binding site. Residues 29–39 carry the 'HIGH' region motif; sequence PTVYNYIHIGN. Cysteine 207, histidine 232, and glutamate 236 together coordinate Zn(2+). Residues 264 to 268 carry the 'KMSKS' region motif; sequence KMSKS. Residue lysine 267 participates in ATP binding.

Belongs to the class-I aminoacyl-tRNA synthetase family. Monomer. It depends on Zn(2+) as a cofactor.

It is found in the cytoplasm. It carries out the reaction tRNA(Cys) + L-cysteine + ATP = L-cysteinyl-tRNA(Cys) + AMP + diphosphate. This chain is Cysteine--tRNA ligase, found in Clostridioides difficile (strain 630) (Peptoclostridium difficile).